An 885-amino-acid chain; its full sequence is Leucine--tRNA ligase (885 aa).

The short motif at 53 to 63 is the 'HIGH' region element; sequence PYPSGKLHMGH. The 'KMSKS' region motif lies at 631–635; that stretch reads KMSKS. K634 provides a ligand contact to ATP.

Belongs to the class-I aminoacyl-tRNA synthetase family.

It localises to the cytoplasm. The enzyme catalyses tRNA(Leu) + L-leucine + ATP = L-leucyl-tRNA(Leu) + AMP + diphosphate. This is Leucine--tRNA ligase from Psychrobacter sp. (strain PRwf-1).